The sequence spans 286 residues: tRNA (guanine-N(7)-)-methyltransferase (286 aa).

The tract at residues Met1–Glu21 is disordered. The S-adenosyl-L-methionine site is built by Glu91, Glu116, Asn143, and Asp165. The active site involves Asp165. Substrate-binding positions include Lys169, Asp201, and Thr262–Glu265.

It belongs to the class I-like SAM-binding methyltransferase superfamily. TrmB family.

The catalysed reaction is guanosine(46) in tRNA + S-adenosyl-L-methionine = N(7)-methylguanosine(46) in tRNA + S-adenosyl-L-homocysteine. Its pathway is tRNA modification; N(7)-methylguanine-tRNA biosynthesis. Catalyzes the formation of N(7)-methylguanine at position 46 (m7G46) in tRNA. The sequence is that of tRNA (guanine-N(7)-)-methyltransferase from Bifidobacterium longum (strain NCC 2705).